Here is a 195-residue protein sequence, read N- to C-terminus: Adenylate kinase (195 aa).

10–15 contributes to the ATP binding site; the sequence is GAGKGT. Residues 30–59 form an NMP region; it reads STGDMLRAAVAAGTPVGLKAKAVMDAGGLV. AMP is bound by residues Thr31, Arg36, 57-59, 85-88, and Gln92; these read GLV and GFPR. Residues 126-143 form an LID region; the sequence is NRAAEAQAKGEAVRKDDD. Arg127 provides a ligand contact to ATP. Residue Arg150 participates in AMP binding. Ala178 serves as a coordination point for ATP.

The protein belongs to the adenylate kinase family. Monomer.

The protein resides in the cytoplasm. It carries out the reaction AMP + ATP = 2 ADP. It functions in the pathway purine metabolism; AMP biosynthesis via salvage pathway; AMP from ADP: step 1/1. In terms of biological role, catalyzes the reversible transfer of the terminal phosphate group between ATP and AMP. Plays an important role in cellular energy homeostasis and in adenine nucleotide metabolism. This Xanthobacter autotrophicus (strain ATCC BAA-1158 / Py2) protein is Adenylate kinase.